The primary structure comprises 362 residues: 3-dehydroquinate synthase (362 aa).

NAD(+) is bound by residues 71–76, 105–109, 129–130, Lys142, Lys151, and 169–172; these read DGEQYK, GVIGD, TT, and CLKT. Positions 184, 247, and 264 each coordinate Zn(2+).

This sequence belongs to the sugar phosphate cyclases superfamily. Dehydroquinate synthase family. Requires NAD(+) as cofactor. The cofactor is Co(2+). Zn(2+) serves as cofactor.

It localises to the cytoplasm. The enzyme catalyses 7-phospho-2-dehydro-3-deoxy-D-arabino-heptonate = 3-dehydroquinate + phosphate. It functions in the pathway metabolic intermediate biosynthesis; chorismate biosynthesis; chorismate from D-erythrose 4-phosphate and phosphoenolpyruvate: step 2/7. In terms of biological role, catalyzes the conversion of 3-deoxy-D-arabino-heptulosonate 7-phosphate (DAHP) to dehydroquinate (DHQ). This is 3-dehydroquinate synthase from Salmonella typhi.